The chain runs to 389 residues: Succinate--CoA ligase [ADP-forming] subunit beta (389 aa).

An ATP-grasp domain is found at 9-244; sequence KQLFADYGLP…ETQEDPREVE (236 aa). Residues Lys-46, 53-55, Glu-99, Gly-102, and Glu-107 each bind ATP; that span reads GRG. Residues Asn-199 and Asp-213 each contribute to the Mg(2+) site. Substrate contacts are provided by residues Asn-264 and 321 to 323; that span reads GIV.

This sequence belongs to the succinate/malate CoA ligase beta subunit family. As to quaternary structure, heterotetramer of two alpha and two beta subunits. Requires Mg(2+) as cofactor.

The catalysed reaction is succinate + ATP + CoA = succinyl-CoA + ADP + phosphate. It catalyses the reaction GTP + succinate + CoA = succinyl-CoA + GDP + phosphate. It participates in carbohydrate metabolism; tricarboxylic acid cycle; succinate from succinyl-CoA (ligase route): step 1/1. In terms of biological role, succinyl-CoA synthetase functions in the citric acid cycle (TCA), coupling the hydrolysis of succinyl-CoA to the synthesis of either ATP or GTP and thus represents the only step of substrate-level phosphorylation in the TCA. The beta subunit provides nucleotide specificity of the enzyme and binds the substrate succinate, while the binding sites for coenzyme A and phosphate are found in the alpha subunit. The sequence is that of Succinate--CoA ligase [ADP-forming] subunit beta from Tolumonas auensis (strain DSM 9187 / NBRC 110442 / TA 4).